The primary structure comprises 191 residues: Glucose-6-phosphate 1-dehydrogenase (191 aa).

N-acetylalanine is present on Ala-2. Ser-8 is subject to Phosphoserine. Residue Thr-10 is modified to Phosphothreonine. NADP(+)-binding positions include 38–45 and Tyr-86; that span reads GASGDLAK. Position 101 (Asp-101) interacts with D-glucose 6-phosphate. His-106 acts as the Proton acceptor in catalysis. An NADP(+)-binding site is contributed by Arg-163. Lys-173 carries the post-translational modification N6-acetyllysine. NADP(+)-binding residues include Tyr-179 and Trp-185. Tyr-179 carries the phosphotyrosine modification.

The protein belongs to the glucose-6-phosphate dehydrogenase family. As to quaternary structure, homotetramer; dimer of dimers. Interacts with SIRT2; the interaction is enhanced by H(2)O(2) treatment. Forms a ternary complex with ALDOB and TP53; this interaction is direct. ALDOB stabilizes the complex inhibiting G6PD activity and keeping oxidative pentose phosphate metabolism in check. In terms of processing, acetylated by ELP3; acetylation inhibits its homodimerization and enzyme activity. Deacetylated by SIRT2; deacetylation stimulates its enzyme activity.

It is found in the cytoplasm. The protein localises to the cytosol. It localises to the membrane. It catalyses the reaction D-glucose 6-phosphate + NADP(+) = 6-phospho-D-glucono-1,5-lactone + NADPH + H(+). The protein operates within carbohydrate degradation; pentose phosphate pathway; D-ribulose 5-phosphate from D-glucose 6-phosphate (oxidative stage): step 1/3. Cytosolic glucose-6-phosphate dehydrogenase that catalyzes the first and rate-limiting step of the oxidative branch within the pentose phosphate pathway/shunt, an alternative route to glycolysis for the dissimilation of carbohydrates and a major source of reducing power and metabolic intermediates for fatty acid and nucleic acid biosynthetic processes. The chain is Glucose-6-phosphate 1-dehydrogenase (G6PD) from Didelphis virginiana (North American opossum).